Consider the following 478-residue polypeptide: tRNA (guanine-N(7)-)-methyltransferase non-catalytic subunit TRM82 (478 aa).

WD repeat units follow at residues 14 to 53 (SSAD…VLDP), 73 to 113 (EQKF…GLQQ), 217 to 258 (GHVS…HIIE), and 263 to 301 (GHEE…LNEK).

The protein belongs to the WD repeat TRM82 family. Forms a heterodimer with the catalytic subunit TRM8.

Its subcellular location is the nucleus. It participates in tRNA modification; N(7)-methylguanine-tRNA biosynthesis. In terms of biological role, required for the formation of N(7)-methylguanine at position 46 (m7G46) in tRNA. In the complex, it is required to stabilize and induce conformational changes of the catalytic subunit. This is tRNA (guanine-N(7)-)-methyltransferase non-catalytic subunit TRM82 from Phaeosphaeria nodorum (strain SN15 / ATCC MYA-4574 / FGSC 10173) (Glume blotch fungus).